The primary structure comprises 836 residues: Glutamate receptor ionotropic, kainate 1 (836 aa).

Positions 1–30 are cleaved as a signal peptide; sequence MERGTVLIQPGLWTRDTSWTLLYFLCYILP. Over 31-561 the chain is Extracellular; it reads QTSPQVLRIG…VFSFLNPLSP (531 aa). N68, N74, N276, N379, N413, N424, and N431 each carry an N-linked (GlcNAc...) asparagine glycan. Positions 516, 518, and 523 each coordinate L-glutamate. N546 carries an N-linked (GlcNAc...) asparagine glycan. Residues 562–582 traverse the membrane as a helical segment; the sequence is DIWMYVLLACLGVSCVLFVIA. Residues 583–638 are Cytoplasmic-facing; it reads RFTPYEWYNPHPCNPDSDVVENNFTLLNSFWFGVGALMQQGSELMPKALSTRIVGG. Residues 639-659 form a helical membrane-spanning segment; sequence IWWFFTLIIISSYTANLAAFL. Over 660–721 the chain is Extracellular; the sequence is TVERMESPID…RQPSALGVEN (62 aa). 2 residues coordinate L-glutamate: S689 and T690. Residues 722 to 742 traverse the membrane as a helical segment; sequence IGGIFIVLAAGLVLSVFVAIG. At 743–836 the chain is on the cytoplasmic side; it reads EFIYKSRKNN…RRTQRKETVA (94 aa).

This sequence belongs to the glutamate-gated ion channel (TC 1.A.10.1) family. GRIK1 subfamily. Homotetramer or heterotetramer of pore-forming glutamate receptor subunits. Tetramers may be formed by the dimerization of dimers. Can form functional heteromeric receptors with GRIK4 and GRIK5. Interacts with KLHL17. Most abundant in the cerebellum. Also present in the suprachiasmatic nuclei of the hypothalamus.

The protein localises to the cell membrane. Its subcellular location is the postsynaptic cell membrane. The catalysed reaction is Ca(2+)(in) = Ca(2+)(out). Functionally, ionotropic glutamate receptor that functions as a cation-permeable ligand-gated ion channel, gated by L-glutamate and the glutamatergic agonist kainic acid. L-glutamate acts as an excitatory neurotransmitter at many synapses in the central nervous system. Binding of the excitatory neurotransmitter L-glutamate induces a conformation change, leading to the opening of the cation channel, and thereby converts the chemical signal to an electrical impulse. The receptor then desensitizes rapidly and enters a transient inactive state, characterized by the presence of bound agonist. The polypeptide is Glutamate receptor ionotropic, kainate 1 (Grik1) (Mus musculus (Mouse)).